We begin with the raw amino-acid sequence, 335 residues long: Putative zinc metalloprotease CPE1693 (335 aa).

Histidine 17 provides a ligand contact to Zn(2+). Glutamate 18 is an active-site residue. Residue histidine 21 participates in Zn(2+) binding. 3 helical membrane-spanning segments follow: residues isoleucine 88–alanine 110, leucine 262–leucine 284, and threonine 312–isoleucine 334. The PDZ domain maps to phenylalanine 96–asparagine 174.

Belongs to the peptidase M50B family. The cofactor is Zn(2+).

Its subcellular location is the cell membrane. The sequence is that of Putative zinc metalloprotease CPE1693 from Clostridium perfringens (strain 13 / Type A).